Consider the following 178-residue polypeptide: Large ribosomal subunit protein bL25 (178 aa).

Belongs to the bacterial ribosomal protein bL25 family. CTC subfamily. Part of the 50S ribosomal subunit; part of the 5S rRNA/L5/L18/L25 subcomplex. Contacts the 5S rRNA. Binds to the 5S rRNA independently of L5 and L18.

This is one of the proteins that binds to the 5S RNA in the ribosome where it forms part of the central protuberance. This Campylobacter lari (strain RM2100 / D67 / ATCC BAA-1060) protein is Large ribosomal subunit protein bL25.